Reading from the N-terminus, the 479-residue chain is 3-phytase B (479 aa).

The first 19 residues, 1–19, serve as a signal peptide directing secretion; that stretch reads MPRTSLLTLACALATGASA. 5 disulfide bridges follow: Cys71/Cys387, Cys128/Cys472, Cys216/Cys441, Cys225/Cys298, and Cys413/Cys421. Catalysis depends on His82, which acts as the Nucleophile. Asn191 carries an N-linked (GlcNAc...) asparagine glycan. Asn315 carries N-linked (GlcNAc...) asparagine glycosylation. The Proton donor role is filled by Asp338. N-linked (GlcNAc...) asparagine glycosylation is present at Asn458.

It belongs to the histidine acid phosphatase family. In terms of assembly, homodimer.

The enzyme catalyses 1D-myo-inositol hexakisphosphate + H2O = 1D-myo-inositol 1,2,4,5,6-pentakisphosphate + phosphate. Its function is as follows. Catalyzes the hydrolysis of inorganic orthophosphate from phytate. In Aspergillus awamori (Black koji mold), this protein is 3-phytase B (phyB).